A 262-amino-acid chain; its full sequence is Nurim (262 aa).

The Nuclear portion of the chain corresponds to 1–4 (MAPA). The helical transmembrane segment at 5-28 (LLLVPAALASFVLAFGTGVEFVRF) threads the bilayer. Residues 29-58 (TSLRPLLGGIPESGGPDARHGWLAALQDRS) are Perinuclear space-facing. A helical transmembrane segment spans residues 59-80 (ILASLAWDLCLLLLFVVQHSLM). Over 81–97 (ATEAVKAWTSRYFGVLQ) the chain is Nuclear. The chain crosses the membrane as a helical span at residues 98-114 (RSLYVACTALALQLVMR). Over 115 to 133 (YWEATPRGPVLWEARAEPW) the chain is Perinuclear space. Residues 134 to 164 (ATWVPLLCFVLHVVSWLLIFSILLVFDYAEL) traverse the membrane as a helical segment. Residues 165 to 191 (MGLKQVYYHVLGLGEPLSLKSPRALRL) are Nuclear-facing. Residues 192-210 (FSHLRHPVCVELLTVLWVV) traverse the membrane as a helical segment. At 211 to 216 (PTLGTD) the chain is on the perinuclear space side. A helical membrane pass occupies residues 217-234 (RLLLALLFTLYLGLAHGL). The Nuclear segment spans residues 235–262 (DQQDLRYLRSQLQRKLQLLSRPQDGEAE).

The protein belongs to the nurim family.

Its subcellular location is the nucleus inner membrane. The chain is Nurim (Nrm) from Rattus norvegicus (Rat).